Here is a 1639-residue protein sequence, read N- to C-terminus: RIMS-binding protein 3A (1639 aa).

Disordered stretches follow at residues 1–22 (MAKD…SSPA), 215–240 (GSPD…CHAP), and 295–364 (SLDS…LTPS). A coiled-coil region spans residues 21–143 (PAAAVLENQR…ELQRQLAEEL (123 aa)). Pro residues predominate over residues 326-339 (SPPPSPLPPPPPPS). Coiled-coil stretches lie at residues 409–442 (QADE…QETN) and 480–619 (LAKD…AEEN). The segment at 697–811 (CRPGHPPEQP…DRDTASEVDD (115 aa)) is disordered. Composition is skewed to polar residues over residues 707-718 (WETSQMPESQVK) and 761-775 (SVPQ…SQPL). The span at 776–790 (SKKTSSQSNSSSEGS) shows a compositional bias: low complexity. The region spanning 832 to 899 (PKLKIFMAQY…PSNFVEQIPD (68 aa)) is the SH3 1 domain. Fibronectin type-III domains are found at residues 995–1083 (APMQ…TLLA) and 1088–1184 (PPLD…IPED). Disordered regions lie at residues 1251-1273 (PRRQ…GAGS) and 1292-1330 (QKSP…FIHL). Residues 1293-1305 (KSPQNHRPPSVSD) are compositionally biased toward polar residues. SH3 domains lie at 1452–1520 (TPAR…EMEV) and 1569–1636 (WTPK…HMSL).

Belongs to the RIMBP family. As to quaternary structure, interacts with LRGUK (via guanylate kinase-like domain). Interacts (via C-terminus) with HOOK1 (via coiled-coil region).

It is found in the cytoplasm. Its subcellular location is the cytoskeleton. In terms of biological role, probable component of the manchette, a microtubule-based structure which plays a key role in sperm head morphogenesis during late stages of sperm development. The protein is RIMS-binding protein 3A (RIMBP3) of Homo sapiens (Human).